The primary structure comprises 483 residues: MLFRSALLSNVLLLPACAHDVLFSRDLPLPIAANAESYTDCANAAWPPSNVGVELVPQPPDDELRAMVDEMSAENIEATITKLVSFGTRHTLSTFNSSTRGINAARDWIASEMRKYAAESNGTMTVEVQSYVQGVASRIPFPVTISNVLAKATGSEDPSRVYVMTGHYDSRVTDVLNYESDAPGANDDASGTAIAMELARVLAKHQPKSTIILGAVSGEEQGLYGSTYLAQTLKNTSTNVEGMLNCDIVGSSTGDRGQKDPFTIRAFAQGPPPLSAESSAKAAQRLQIGGENDSPARELARFSAEVAANNATGMKVAIIYRLDRFLRGGDHTGFLQAGYPAIRYTEPNENFAHQHQDIRTENGTVYGDLIEFVDFDFTARVGKVNLATLWSLAQAPAMPRNVTIDATILDNESRIKWIISNSTDVASYEVVWRSTIASLWTHMLDVGKVGYVVLPLSKDNVIFGIRAVGKNGYKSPAVYPFPG.

The first 18 residues, 1–18, serve as a signal peptide directing secretion; the sequence is MLFRSALLSNVLLLPACA. 2 N-linked (GlcNAc...) asparagine glycosylation sites follow: N96 and N121. Zn(2+)-binding residues include H167, D187, and E220. N-linked (GlcNAc...) asparagine glycosylation occurs at N235. Residue D247 coordinates Zn(2+). N310, N362, N401, N411, and N421 each carry an N-linked (GlcNAc...) asparagine glycan. Residues 396–483 enclose the Fibronectin type-III domain; the sequence is PAMPRNVTID…KSPAVYPFPG (88 aa).

The protein belongs to the peptidase M28 family. M28B subfamily. Requires Zn(2+) as cofactor.

The protein resides in the secreted. The chain is Probable zinc metalloprotease PTRG_04977 from Pyrenophora tritici-repentis (strain Pt-1C-BFP) (Wheat tan spot fungus).